Consider the following 208-residue polypeptide: Large ribosomal subunit protein bL25 (208 aa).

Residues 1-21 (MSNEFSLNAEKRDVQGKGASR) form a disordered region.

It belongs to the bacterial ribosomal protein bL25 family. CTC subfamily. In terms of assembly, part of the 50S ribosomal subunit; part of the 5S rRNA/L5/L18/L25 subcomplex. Contacts the 5S rRNA. Binds to the 5S rRNA independently of L5 and L18.

Its function is as follows. This is one of the proteins that binds to the 5S RNA in the ribosome where it forms part of the central protuberance. The protein is Large ribosomal subunit protein bL25 of Hahella chejuensis (strain KCTC 2396).